The primary structure comprises 426 residues: Serine hydroxymethyltransferase (426 aa).

Residues L115 and 119–121 (GHI) each bind (6S)-5,6,7,8-tetrahydrofolate. The residue at position 225 (K225) is an N6-(pyridoxal phosphate)lysine.

The protein belongs to the SHMT family. In terms of assembly, homodimer. Pyridoxal 5'-phosphate is required as a cofactor.

Its subcellular location is the cytoplasm. It participates in amino-acid biosynthesis; glycine biosynthesis; glycine from L-serine: step 1/1. Functionally, catalyzes the reversible interconversion of serine and glycine with a modified folate serving as the one-carbon carrier. Also exhibits a pteridine-independent aldolase activity toward beta-hydroxyamino acids, producing glycine and aldehydes, via a retro-aldol mechanism. This is Serine hydroxymethyltransferase from Thermoplasma volcanium (strain ATCC 51530 / DSM 4299 / JCM 9571 / NBRC 15438 / GSS1).